A 131-amino-acid chain; its full sequence is MKRYLTWIVAAELLFATGNLHANEVEVEVPGLLTDHTVSSIGHEFYRAFSDKWESEYTGNLTINERPSARWGSWITITVNQDVIFQTFLFPMKRDFEKTVVFALAQTEEALNRRQIDQTLLSTSDLARDEF.

Positions 1–22 (MKRYLTWIVAAELLFATGNLHA) are cleaved as a signal peptide.

Its function is as follows. May be involved in the biogenesis of curli organelles. This Salmonella typhi protein is Curli production assembly/transport component CsgE (csgE).